Here is a 900-residue protein sequence, read N- to C-terminus: MKASEEEYRLNFFIKNDFKRKICKSCKTPFWTRDEKKEYCSDIPCTDYYFFDINIKSQPLTVKEAREKFLSFFEKRGHTRISPKPVLARWREDLYLTIASIVDFQPHVTSGLVPPPANPLVVSQPSIRLEDIDNVGITFGRHLTTFEMAAHHAFNYPDHYVYWKEETTAYATEFFTKELGIPEEELNFKESWWEGGGNAGPCLEVTVGGLELATLVFMQYKITDNGNYTPLKLKIVDTGYGVERIAWITQKTPSAFHAIYGNLVYKFFNKIGVAYIDETLLKVASRFAGKIDPDNPDTIKIHRQMVSKELGIDIKAVEEELDRAAKVFQILDHTKTIMLMLADGLVPSNSGEGYLGRLVIRRALKVLRLLKSDVRLYELVKEQIDFWKEDFPQVLKNKDYILDAVELEQQRFEKILEKVPSIASTLARKSEITTEDLIQVYDSNGIPPDLLEEELKKKSVKFELPRNFYALVAKRHQTSTIKSAYDKVKLPKDMLEYITALQPTEKLYYKDQYMRSFEGKVLGVYKNYLILDKTTFYPEGGGQLGDTGLIIDEKSSKRYEVIDTQKVNDVIVHILKEEPSTIKVGDNVRGEINWERRYRLMRHHTVTHVILAAAKKVLGEHVWQAGAEKTPEKGRLDITHHKTLTEEEVKLIENYANSVISDRRPVKPLEMNRMEAEMKYGVSIYEGGVPNSATIRLLEIKDWDIESCGGTHVSNTSEIGAVKIINVERIQDGVIRLEYVAGPALVDYIRETEAKIVEASKIIGSSPDQLTSRLRRILNEIEEKNNLIIQYRRIIETELLNNLKPYEINGNKIYIIEGLGDEEENKEILRKLTSTDNTIAISISDNRLQIATSKNMRVDKIVEELLKGGGKGGGKGTFANVILNSKKSKEEIIEIVRKSL.

Zn(2+) is bound by residues histidine 604, histidine 608, cysteine 708, and histidine 712.

This sequence belongs to the class-II aminoacyl-tRNA synthetase family. Zn(2+) is required as a cofactor.

Its subcellular location is the cytoplasm. It carries out the reaction tRNA(Ala) + L-alanine + ATP = L-alanyl-tRNA(Ala) + AMP + diphosphate. In terms of biological role, catalyzes the attachment of alanine to tRNA(Ala) in a two-step reaction: alanine is first activated by ATP to form Ala-AMP and then transferred to the acceptor end of tRNA(Ala). Also edits incorrectly charged Ser-tRNA(Ala) and Gly-tRNA(Ala) via its editing domain. The sequence is that of Alanine--tRNA ligase from Saccharolobus islandicus (strain M.16.27) (Sulfolobus islandicus).